The primary structure comprises 447 residues: Phosphoglucosamine mutase (447 aa).

Ser-108 acts as the Phosphoserine intermediate in catalysis. Residues Ser-108, Asp-247, Asp-249, and Asp-251 each contribute to the Mg(2+) site. Ser-108 carries the post-translational modification Phosphoserine.

Belongs to the phosphohexose mutase family. Requires Mg(2+) as cofactor. In terms of processing, activated by phosphorylation.

It catalyses the reaction alpha-D-glucosamine 1-phosphate = D-glucosamine 6-phosphate. Catalyzes the conversion of glucosamine-6-phosphate to glucosamine-1-phosphate. In Bordetella petrii (strain ATCC BAA-461 / DSM 12804 / CCUG 43448), this protein is Phosphoglucosamine mutase.